The following is a 189-amino-acid chain: Movement protein (189 aa).

The protein belongs to the tombusvirus/aureusvirus movement protein p22 family. Interacts with host protein HFI22. In terms of processing, phosphorylated.

It localises to the host membrane. Transports viral genome to neighboring plant cells directly through plasmosdesmata, without any budding. The movement protein allows efficient cell to cell propagation, by bypassing the host cell wall barrier. The sequence is that of Movement protein from Capsicum annuum (Capsicum pepper).